The following is a 415-amino-acid chain: Levansucrase (415 aa).

5 residues coordinate sucrose: tryptophan 45, aspartate 46, alanine 132, arginine 202, and aspartate 203. Aspartate 46 (nucleophile) is an active-site residue. The active-site Proton donor/acceptor is glutamate 287.

Belongs to the glycosyl hydrolase 68 family.

It localises to the secreted. It catalyses the reaction [6)-beta-D-fructofuranosyl-(2-&gt;](n) alpha-D-glucopyranoside + sucrose = [6)-beta-D-fructofuranosyl-(2-&gt;](n+1) alpha-D-glucopyranoside + D-glucose. In terms of biological role, catalyzes the synthesis of levan, a fructose polymer, by transferring the fructosyl moiety from sucrose to a growing acceptor molecule. This is Levansucrase from Erwinia amylovora (Fire blight bacteria).